Reading from the N-terminus, the 452-residue chain is Pup--protein ligase (452 aa).

E9 serves as a coordination point for Mg(2+). R53 serves as a coordination point for ATP. Position 55 (Y55) interacts with Mg(2+). The active-site Proton acceptor is the D57. E63 is a Mg(2+) binding site. 2 residues coordinate ATP: T66 and W419.

Belongs to the Pup ligase/Pup deamidase family. Pup-conjugating enzyme subfamily.

The enzyme catalyses ATP + [prokaryotic ubiquitin-like protein]-L-glutamate + [protein]-L-lysine = ADP + phosphate + N(6)-([prokaryotic ubiquitin-like protein]-gamma-L-glutamyl)-[protein]-L-lysine.. Its pathway is protein degradation; proteasomal Pup-dependent pathway. It participates in protein modification; protein pupylation. Functionally, catalyzes the covalent attachment of the prokaryotic ubiquitin-like protein modifier Pup to the proteasomal substrate proteins, thereby targeting them for proteasomal degradation. This tagging system is termed pupylation. The ligation reaction involves the side-chain carboxylate of the C-terminal glutamate of Pup and the side-chain amino group of a substrate lysine. In Actinosynnema mirum (strain ATCC 29888 / DSM 43827 / JCM 3225 / NBRC 14064 / NCIMB 13271 / NRRL B-12336 / IMRU 3971 / 101), this protein is Pup--protein ligase.